The primary structure comprises 180 residues: Inner membrane-spanning protein YciB (180 aa).

The next 5 membrane-spanning stretches (helical) occupy residues 10-30, 47-67, 74-94, 121-141, and 151-171; these read IIAF…GVLM, ITTR…VTLL, IKMK…GGLI, YAWI…AEFW, and VFGI…YMYH.

Belongs to the YciB family.

Its subcellular location is the cell inner membrane. Its function is as follows. Plays a role in cell envelope biogenesis, maintenance of cell envelope integrity and membrane homeostasis. This Idiomarina loihiensis (strain ATCC BAA-735 / DSM 15497 / L2-TR) protein is Inner membrane-spanning protein YciB.